Here is a 138-residue protein sequence, read N- to C-terminus: Succinate dehydrogenase assembly factor 4, mitochondrial (138 aa).

A mitochondrion-targeting transit peptide spans 1–32 (MLCAIKSTGYRYPRTGALNLLRGRPFNMATRK). Polar residues predominate over residues 71-98 (QATGDRTKESLNSPLLTKNDIGSFSPEF). The tract at residues 71 to 138 (QATGDRTKES…YSFNGRVTDF (68 aa)) is disordered.

Belongs to the SDHAF4 family. In terms of assembly, interacts with SDH1 in its FAD-bound form.

It is found in the mitochondrion matrix. Functionally, plays an essential role in the assembly of succinate dehydrogenase (SDH), an enzyme complex (also referred to as respiratory complex II) that is a component of both the tricarboxylic acid (TCA) cycle and the mitochondrial electron transport chain, and which couples the oxidation of succinate to fumarate with the reduction of ubiquinone (coenzyme Q) to ubiquinol. Binds to the flavoprotein subunit SDH1 in its FAD-bound form, blocking the generation of excess reactive oxygen species (ROS) and facilitating its assembly with the iron-sulfur protein subunit SDH2 into the SDH catalytic dimer. This Saccharomyces cerevisiae (strain ATCC 204508 / S288c) (Baker's yeast) protein is Succinate dehydrogenase assembly factor 4, mitochondrial.